Consider the following 981-residue polypeptide: uncharacterized protein (981 aa).

Disordered regions lie at residues 65–133 (NIDN…SNNS), 149–463 (SSNS…NKIE), 491–580 (SNNI…DSPL), 592–834 (EQTN…LNQV), and 861–891 (VQND…NDGN). The span at 75–88 (SSDDDDDDDDDDDY) shows a compositional bias: acidic residues. Low complexity-rich tracts occupy residues 89–133 (NNNN…SNNS), 149–158 (SSNSINNNDN), and 170–181 (SAKTTSSLTSSK). A compositionally biased stretch (basic and acidic residues) spans 182–195 (RSLDSRNRNRDRSY). The segment covering 196–206 (TRSRSRSRSRS) has biased composition (basic residues). The segment covering 207–227 (YSRGFSSLSRSRSRSRSISSR) has biased composition (low complexity). The segment covering 228–269 (SRSRSRSRRSRSRSSRSRSRSRSKSKSKSRRSRSRSRSRRSR) has biased composition (basic residues). Over residues 270–292 (SRSDSRSRSDSRGRSRSRSDSRK) the composition is skewed to basic and acidic residues. A compositionally biased stretch (basic residues) spans 314–358 (SSKRHQNSRKRNRSYSRSRTRSWSRSRTRSRSRRRYGGRTFRSPR). Over residues 359 to 452 (RSRDDSRDRG…SQSPHNEKNK (94 aa)) the composition is skewed to basic and acidic residues. Residues 491–553 (SNNINNNNIK…SHNNTNGNVN (63 aa)) show a composition bias toward low complexity. Polar residues-rich tracts occupy residues 554–576 (GVSK…STDL) and 605–622 (ESNN…SSTE). The span at 623–634 (NENKNRENEKNN) shows a compositional bias: basic and acidic residues. Composition is skewed to low complexity over residues 635 to 820 (SENS…NNNS) and 867 to 891 (SSPI…NDGN).

This is an uncharacterized protein from Dictyostelium discoideum (Social amoeba).